A 549-amino-acid polypeptide reads, in one-letter code: Probable chaperonin-like protein PrmG (549 aa).

Belongs to the chaperonin (HSP60) family.

Probably plays an essential role in the productive folding of PrmA, and thus in the formation of the active PrmABCD complex. This Rhodococcus jostii (strain RHA1) protein is Probable chaperonin-like protein PrmG (prmG).